The chain runs to 201 residues: Recombination protein RecR (201 aa).

The C4-type zinc-finger motif lies at Cys60 to Cys75. A Toprim domain is found at Thr83 to Pro178.

It belongs to the RecR family.

In terms of biological role, may play a role in DNA repair. It seems to be involved in an RecBC-independent recombinational process of DNA repair. It may act with RecF and RecO. The polypeptide is Recombination protein RecR (Methylorubrum extorquens (strain CM4 / NCIMB 13688) (Methylobacterium extorquens)).